The following is a 372-amino-acid chain: N-acetyllactosaminide beta-1,3-N-acetylglucosaminyltransferase 3 (372 aa).

The Cytoplasmic portion of the chain corresponds to 1–10 (MKYLRHRRPN). The helical; Signal-anchor for type II membrane protein transmembrane segment at 11-31 (ATLILAIGAFTLLLFSLLVSP) threads the bilayer. The Lumenal segment spans residues 32–372 (PTCKVQEQPP…LTCGNQTQIY (341 aa)). 5 N-linked (GlcNAc...) asparagine glycosylation sites follow: asparagine 64, asparagine 184, asparagine 202, asparagine 362, and asparagine 367.

Belongs to the glycosyltransferase 31 family. In terms of tissue distribution, expressed in colon, jejunum, stomach, esophagus, placenta and trachea.

The protein localises to the golgi apparatus membrane. It catalyses the reaction a 3-O-{beta-D-galactosyl-(1-&gt;3)-[N-acetyl-beta-D-glucosaminyl-(1-&gt;6)]-N-acetyl-alpha-D-galactosaminyl}-L-threonyl-[protein] + UDP-N-acetyl-alpha-D-glucosamine = 3-O-{beta-D-GlcNAc-(1-&gt;3)-beta-D-Gal-(1-&gt;3)-[beta-D-GlcNAc-(1-&gt;6)]-alpha-D-GalNAc}-L-threonyl-[protein] + UDP + H(+). It carries out the reaction 3-O-{beta-D-galactosyl-(1-&gt;3)-[N-acetyl-beta-D-glucosaminyl-(1-&gt;6)]-N-acetyl-alpha-D-galactosaminyl}-L-seryl-[protein] + UDP-N-acetyl-alpha-D-glucosamine = 3-O-{beta-D-GlcNAc-(1-&gt;3)-beta-D-Gal-(1-&gt;3)-[beta-D-GlcNAc-(1-&gt;6)]-alpha-D-GalNAc}-L-seryl-[protein] + UDP + H(+). The enzyme catalyses a beta-D-galactosyl-(1-&gt;4)-N-acetyl-beta-D-glucosaminyl derivative + UDP-N-acetyl-alpha-D-glucosamine = an N-acetyl-beta-D-glucosaminyl-(1-&gt;3)-beta-D-galactosyl-(1-&gt;4)-N-acetyl-beta-D-glucosaminyl derivative + UDP + H(+). It participates in protein modification; protein glycosylation. In terms of biological role, beta-1,3-N-acetylglucosaminyltransferase involved in the synthesis of poly-N-acetyllactosamine. Has activity for type 2 oligosaccharides. Also acts as a core1-1,3-N-acetylglucosaminyltransferase (Core1-beta3GlcNAcT) to form the 6-sulfo sialyl Lewis x on extended core1 O-glycans. The sequence is that of N-acetyllactosaminide beta-1,3-N-acetylglucosaminyltransferase 3 (B3GNT3) from Homo sapiens (Human).